A 267-amino-acid chain; its full sequence is Formamidopyrimidine-DNA glycosylase (267 aa).

The Schiff-base intermediate with DNA role is filled by proline 2. Residue glutamate 3 is the Proton donor of the active site. The Proton donor; for beta-elimination activity role is filled by lysine 53. DNA-binding residues include histidine 82 and arginine 100. The FPG-type zinc-finger motif lies at 230–264 (AVYGREGLPCPACGRPVERRVVAGRGTHFCPTCQG). Residue arginine 254 is the Proton donor; for delta-elimination activity of the active site.

Belongs to the FPG family. As to quaternary structure, monomer. Zn(2+) is required as a cofactor.

The enzyme catalyses Hydrolysis of DNA containing ring-opened 7-methylguanine residues, releasing 2,6-diamino-4-hydroxy-5-(N-methyl)formamidopyrimidine.. It catalyses the reaction 2'-deoxyribonucleotide-(2'-deoxyribose 5'-phosphate)-2'-deoxyribonucleotide-DNA = a 3'-end 2'-deoxyribonucleotide-(2,3-dehydro-2,3-deoxyribose 5'-phosphate)-DNA + a 5'-end 5'-phospho-2'-deoxyribonucleoside-DNA + H(+). Involved in base excision repair of DNA damaged by oxidation or by mutagenic agents. Acts as a DNA glycosylase that recognizes and removes damaged bases. Has a preference for oxidized purines, such as 7,8-dihydro-8-oxoguanine (8-oxoG). Has AP (apurinic/apyrimidinic) lyase activity and introduces nicks in the DNA strand. Cleaves the DNA backbone by beta-delta elimination to generate a single-strand break at the site of the removed base with both 3'- and 5'-phosphates. This is Formamidopyrimidine-DNA glycosylase from Thermus thermophilus (strain ATCC BAA-163 / DSM 7039 / HB27).